The sequence spans 72 residues: Defensin-like protein 35 (72 aa).

The signal sequence occupies residues 1–22 (MASNKISFSFVLCLYMCSLLDA). Disulfide bonds link cysteine 32–cysteine 58, cysteine 44–cysteine 67, and cysteine 48–cysteine 69.

Belongs to the DEFL family.

The protein resides in the secreted. The polypeptide is Defensin-like protein 35 (Arabidopsis thaliana (Mouse-ear cress)).